Consider the following 177-residue polypeptide: Dual-action ribosomal maturation protein DarP (177 aa).

Residues 1–12 (MKIVGDSEHFKQ) show a composition bias toward basic and acidic residues. A disordered region spans residues 1–26 (MKIVGDSEHFKQPYDSNDEYVSKTED).

It belongs to the DarP family.

Its subcellular location is the cytoplasm. In terms of biological role, member of a network of 50S ribosomal subunit biogenesis factors which assembles along the 30S-50S interface, preventing incorrect 23S rRNA structures from forming. Promotes peptidyl transferase center (PTC) maturation. This is Dual-action ribosomal maturation protein DarP from Shewanella oneidensis (strain ATCC 700550 / JCM 31522 / CIP 106686 / LMG 19005 / NCIMB 14063 / MR-1).